An 840-amino-acid chain; its full sequence is Protein translocase subunit SecA (840 aa).

Residues Gln87, 105–109 (GEGKT), and Asp494 each bind ATP. Residues 791 to 840 (LRKEQEDQPMFFGPAEGAGQKPQTRKDRKVGRNDPCPCGSGKKYKKCCGK) form a disordered region. Zn(2+) contacts are provided by Cys826, Cys828, Cys837, and Cys838.

Belongs to the SecA family. In terms of assembly, monomer and homodimer. Part of the essential Sec protein translocation apparatus which comprises SecA, SecYEG and auxiliary proteins SecDF-YajC and YidC. Requires Zn(2+) as cofactor.

The protein resides in the cell inner membrane. It is found in the cytoplasm. It catalyses the reaction ATP + H2O + cellular proteinSide 1 = ADP + phosphate + cellular proteinSide 2.. Part of the Sec protein translocase complex. Interacts with the SecYEG preprotein conducting channel. Has a central role in coupling the hydrolysis of ATP to the transfer of proteins into and across the cell membrane, serving as an ATP-driven molecular motor driving the stepwise translocation of polypeptide chains across the membrane. The chain is Protein translocase subunit SecA from Syntrophobacter fumaroxidans (strain DSM 10017 / MPOB).